The sequence spans 93 residues: Small hydrophobic protein (93 aa).

The next 2 membrane-spanning stretches (helical) occupy residues 5–25 and 32–52; these read LIII…VLAY and AFGP…IYFP.

The protein resides in the membrane. This chain is Small hydrophobic protein, found in Tupaia virus (isolate Tupaia/Thailand/-/1986) (TUPV).